We begin with the raw amino-acid sequence, 603 residues long: Peroxisomal targeting signal receptor (603 aa).

Residue cysteine 10 forms a Glycyl cysteine thioester (Cys-Gly) (interchain with G-Cter in ubiquitin) linkage. The amphipathic helix 1 (AH1) stretch occupies residues 11–33 (SANSNAIAQFNKHTQQDRSLQRQ). Lysine 22 participates in a covalent cross-link: Glycyl lysine isopeptide (Lys-Gly) (interchain with G-Cter in ubiquitin). Residues 23–49 (HTQQDRSLQRQAANQQGIVQNGQGFKK) are disordered. Residues 31–45 (QRQAANQQGIVQNGQ) show a composition bias toward polar residues. Positions 58-76 (RQNMDQFMNNGPSQSNFQF) are amphipathic helix 2 (AH2). Short sequence motifs (wxxxF/Y motif) lie at residues 99-103 (WTNEF), 128-132 (WATEF), and 192-196 (WDNQF). Residues 232–248 (FQEVWDSLNSEEVENDF) are amphipathic helix 4 (AH4). A WxxxF/Y motif 4 motif is present at residues 271–275 (WEKDF). 5 TPR repeats span residues 304–338 (ESDP…NEGH), 339–372 (INAW…HPEN), 449–482 (PDVQ…KPDD), 484–516 (VLWN…KPTF), and 518–550 (RARY…HQVE).

Belongs to the peroxisomal targeting signal receptor family. In terms of assembly, interacts (via WxxxF/Y and LVxEF motifs) with PEX14; promoting translocation through the PEX13-PEX14 docking complex. Post-translationally, monoubiquitinated at Cys-10 by PEX2 during PEX5 passage through the retrotranslocation channel: monoubiquitination acts as a signal for PEX5 extraction and is required for proper export from peroxisomes and recycling. When PEX5 recycling is compromised, polyubiquitinated at Lys-22 by PEX10 during its passage through the retrotranslocation channel, leading to its degradation.

The protein localises to the cytoplasm. It is found in the cytosol. It localises to the peroxisome matrix. Functionally, receptor that mediates peroxisomal import of proteins containing a C-terminal PTS1-type tripeptide peroxisomal targeting signal (SKL-type). Binds to cargo proteins containing a PTS1 peroxisomal targeting signal in the cytosol, and translocates them into the peroxisome matrix by passing through the PEX13-PEX14 docking complex along with cargo proteins. PEX5 receptor is then retrotranslocated into the cytosol, leading to release of bound cargo in the peroxisome matrix, and reset for a subsequent peroxisome import cycle. In Debaryomyces hansenii (strain ATCC 36239 / CBS 767 / BCRC 21394 / JCM 1990 / NBRC 0083 / IGC 2968) (Yeast), this protein is Peroxisomal targeting signal receptor (PEX5).